The chain runs to 1180 residues: MSSSKKLAGLRDNFSLLGEKNKILVANRGEIPIRIFRSAHELSMRTIAIYSHEDRLSMHRLKADEAYVIGEEGQYTPVGAYLAMDEIIEIAKKHKVDFIHPGYGFLSENSEFADKVVKAGITWIGPPAEVIDSVGDKVSARHLAARANVPTVPGTPGPIETVQEALDFVNEYGYPVIIKAAFGGGGRGMRVVREGDDVADAFQRATSEARTAFGNGTCFVERFLDKPKHIEVQLLADNHGNVVHLFERDCSVQRRHQKVVEVAPAKTLPREVRDAILTDAVKLAKVCGYRNAGTAEFLVDNQNRHYFIEINPRIQVEHTITEEITGIDIVSAQIQIAAGATLTQLGLLQDKITTRGFSIQCRITTEDPSKNFQPDTGRLEVYRSAGGNGVRLDGGNAYAGATISPHYDSMLVKCSCSGSTYEIVRRKMIRALIEFRIRGVKTNIPFLLTLLTNPVFIEGTYWTTFIDDTPQLFQMVSSQNRAQKLLHYLADLAVNGSSIKGQIGLPKLKSNPSVPHLHDAQGNVINVTKSAPPSGWRQVLLEKGPSEFAKQVRQFNGTLLMDTTWRDAHQSLLATRVRTHDLATIAPTTAHALAGAFALECWGGATFDVAMRFLHEDPWERLRKLRSLVPNIPFQMLLRGANGVAYSSLPDNAIDHFVKQAKDNGVDIFRVFDALNDLEQLKVGVNAVKKAGGVVEATVCYSGDMLQPGKKYNLDYYLEVVEKIVQMGTHILGIKDMAGTMKPAAAKLLIGSLRTRYPDLPIHVHSHDSAGTAVASMTACALAGADVVDVAINSMSGLTSQPSINALLASLEGNIDTGINVEHVRELDAYWAEMRLLYSCFEADLKGPDPEVYQHEIPGGQLTNLLFQAQQLGLGEQWAETKRAYREANYLLGDIVKVTPTSKVVGDLAQFMVSNKLTSDDIRRLANSLDFPDSVMDFFEGLIGQPYGGFPEPLRSDVLRNKRRKLTCRPGLELEPFDLEKIREDLQNRFGDIDECDVASYNMYPRVYEDFQKIRETYGDLSVLPTKNFLAPAEPDEEIEVTIEQGKTLIIKLQAVGDLNKKTGQREVYFELNGELRKIRVADKSQNIQSVAKPKADVHDTHQIGAPMAGVIIEVKVHKGSLVKKGESIAVLSAMKMEMVVSSPADGQVKDVFIKDGESVDASDLLVVLEEETLPPSQKK.

Residue serine 2 is modified to N-acetylserine. The region spanning 19-471 (EKNKILVANR…WTTFIDDTPQ (453 aa)) is the Biotin carboxylation domain. The ATP site is built by lysine 137, glutamate 221, and histidine 256. One can recognise an ATP-grasp domain in the interval 141–338 (RHLAARANVP…IVSAQIQIAA (198 aa)). The active site involves arginine 313. The region spanning 558–825 (TLLMDTTWRD…DTGINVEHVR (268 aa)) is the Pyruvate carboxyltransferase domain. Substrate is bound by residues 566–570 (RDAHQ) and arginine 639. Residue aspartate 567 participates in a divalent metal cation binding. 3 residues coordinate a divalent metal cation: lysine 735, histidine 765, and histidine 767. Lysine 735 carries the N6-carboxylysine modification. Threonine 899 lines the substrate pocket. Positions 1095 to 1170 (KADVHDTHQI…DASDLLVVLE (76 aa)) constitute a Biotinyl-binding domain. Residue lysine 1136 is modified to N6-biotinyllysine.

As to quaternary structure, homotetramer. Biotin is required as a cofactor. It depends on Zn(2+) as a cofactor.

Its subcellular location is the cytoplasm. The enzyme catalyses hydrogencarbonate + pyruvate + ATP = oxaloacetate + ADP + phosphate + H(+). It participates in carbohydrate biosynthesis; gluconeogenesis. In terms of biological role, pyruvate carboxylase catalyzes a 2-step reaction, involving the ATP-dependent carboxylation of the covalently attached biotin in the first step and the transfer of the carboxyl group to pyruvate in the second. The chain is Pyruvate carboxylase 2 (PYC2) from Saccharomyces cerevisiae (strain ATCC 204508 / S288c) (Baker's yeast).